The primary structure comprises 280 residues: Succinate dehydrogenase [ubiquinone] iron-sulfur subunit, mitochondrial (280 aa).

Residues 1–25 constitute a mitochondrion transit peptide; it reads MAAVCFSLSRCCSAVHRPAVTAVRF. Positions 39 to 129 constitute a 2Fe-2S ferredoxin-type domain; sequence KKFQIYRWDP…TSKVTKIYPL (91 aa). [2Fe-2S] cluster contacts are provided by Cys-92, Cys-97, Cys-100, and Cys-112. Positions 175-205 constitute a 4Fe-4S ferredoxin-type domain; sequence DRQKLDGLYECILCACCSTSCPSYWWNADKY. 3 residues coordinate [4Fe-4S] cluster: Cys-185, Cys-188, and Cys-191. Cys-195 contributes to the [3Fe-4S] cluster binding site. An a ubiquinone-binding site is contributed by Trp-200. [3Fe-4S] cluster-binding residues include Cys-242 and Cys-248. [4Fe-4S] cluster is bound at residue Cys-252.

This sequence belongs to the succinate dehydrogenase/fumarate reductase iron-sulfur protein family. As to quaternary structure, component of complex II composed of four subunits: the flavoprotein (FP) sdha, iron-sulfur protein (IP) sdhb, and a cytochrome b composed of sdhc and sdhd. [2Fe-2S] cluster is required as a cofactor. [3Fe-4S] cluster serves as cofactor. The cofactor is [4Fe-4S] cluster.

It localises to the mitochondrion inner membrane. The enzyme catalyses a quinone + succinate = fumarate + a quinol. It carries out the reaction (R)-malate + a quinone = enol-oxaloacetate + a quinol. It catalyses the reaction (S)-malate + a quinone = enol-oxaloacetate + a quinol. The protein operates within carbohydrate metabolism; tricarboxylic acid cycle; fumarate from succinate (eukaryal route): step 1/1. With respect to regulation, enol-oxaloacetate inhibits the succinate dehydrogenase activity. Functionally, iron-sulfur protein (IP) subunit of the succinate dehydrogenase complex (mitochondrial respiratory chain complex II), responsible for transferring electrons from succinate to ubiquinone (coenzyme Q). SDH also oxidizes malate to the non-canonical enol form of oxaloacetate, enol-oxaloacetate. Enol-oxaloacetate, which is a potent inhibitor of the succinate dehydrogenase activity, is further isomerized into keto-oxaloacetate. The chain is Succinate dehydrogenase [ubiquinone] iron-sulfur subunit, mitochondrial (sdhb) from Danio rerio (Zebrafish).